The sequence spans 480 residues: Glutamyl-tRNA(Gln) amidotransferase subunit A (480 aa).

Active-site charge relay system residues include Lys-74 and Ser-149. Ser-173 functions as the Acyl-ester intermediate in the catalytic mechanism.

This sequence belongs to the amidase family. GatA subfamily. In terms of assembly, heterotrimer of A, B and C subunits.

The catalysed reaction is L-glutamyl-tRNA(Gln) + L-glutamine + ATP + H2O = L-glutaminyl-tRNA(Gln) + L-glutamate + ADP + phosphate + H(+). Allows the formation of correctly charged Gln-tRNA(Gln) through the transamidation of misacylated Glu-tRNA(Gln) in organisms which lack glutaminyl-tRNA synthetase. The reaction takes place in the presence of glutamine and ATP through an activated gamma-phospho-Glu-tRNA(Gln). The protein is Glutamyl-tRNA(Gln) amidotransferase subunit A of Vesicomyosocius okutanii subsp. Calyptogena okutanii (strain HA).